The following is a 416-amino-acid chain: Phosphatidylinositol 5-phosphate 4-kinase type-2 beta (416 aa).

At serine 2 the chain carries N-acetylserine. Threonine 8 is subject to Phosphothreonine. A Phosphoserine modification is found at serine 19. The PIPK domain occupies 38–415 (ASEPILSVLM…RFNEFMSNIL (378 aa)). A required for interaction with PIP5K1A region spans residues 64-70 (VMLMPDD). An N6-acetyllysine mark is found at lysine 94 and lysine 150. ATP is bound by residues 202-204 (RNV) and lysine 214. GTP-binding positions include 203–204 (NV) and lysine 214. The residue at position 322 (threonine 322) is a Phosphothreonine. Serine 326 carries the phosphoserine modification. Residue aspartate 369 participates in GTP binding.

In terms of assembly, homodimer. Binds TNFRSF1A. Interacts with PIP4K2A; the interaction suppresses ubiquitination by the SPOP/CUL3 complex. Probably interacts with PIP5K1A; the interaction inhibits PIP5K1A kinase activity. Post-translationally, ubiquitinated by the SPOP/CUL3 complex. Ubiquitination is stimulated by PtdIns5P levels. In terms of processing, phosphorylated on serine residues.

Its subcellular location is the endoplasmic reticulum membrane. The protein localises to the cell membrane. It localises to the nucleus. The protein resides in the cytoplasm. It catalyses the reaction a 1,2-diacyl-sn-glycero-3-phospho-(1D-myo-inositol-5-phosphate) + ATP = a 1,2-diacyl-sn-glycero-3-phospho-(1D-myo-inositol-4,5-bisphosphate) + ADP + H(+). It carries out the reaction 1,2-dihexadecanoyl-sn-glycero-3-phospho-(1D-myo-inositol-5-phosphate) + ATP = 1,2-dihexadecanoyl-sn-glycero-3-phospho-(1D-myo-inositol-4,5-bisphosphate) + ADP + H(+). The enzyme catalyses 1,2-dihexadecanoyl-sn-glycero-3-phospho-(1D-myo-inositol-5-phosphate) + GTP = 1,2-dihexadecanoyl-sn-glycero-3-phospho-(1D-myo-inositol-4,5-bisphosphate) + GDP + H(+). Its function is as follows. Participates in the biosynthesis of phosphatidylinositol 4,5-bisphosphate. Preferentially utilizes GTP, rather than ATP, for PI(5)P phosphorylation and its activity reflects changes in direct proportion to the physiological GTP concentration. Its GTP-sensing activity is critical for metabolic adaptation. PIP4Ks negatively regulate insulin signaling through a catalytic-independent mechanism. They interact with PIP5Ks and suppress PIP5K-mediated PtdIns(4,5)P2 synthesis and insulin-dependent conversion to PtdIns(3,4,5)P3. The protein is Phosphatidylinositol 5-phosphate 4-kinase type-2 beta of Rattus norvegicus (Rat).